The following is a 201-amino-acid chain: tRNA (guanine-N(7)-)-methyltransferase (201 aa).

Residues E34, E59, D86, and D107 each contribute to the S-adenosyl-L-methionine site. The active site involves D107. Substrate is bound by residues K111, D143, and 181–184; that span reads TDYE.

It belongs to the class I-like SAM-binding methyltransferase superfamily. TrmB family.

It catalyses the reaction guanosine(46) in tRNA + S-adenosyl-L-methionine = N(7)-methylguanosine(46) in tRNA + S-adenosyl-L-homocysteine. The protein operates within tRNA modification; N(7)-methylguanine-tRNA biosynthesis. Its function is as follows. Catalyzes the formation of N(7)-methylguanine at position 46 (m7G46) in tRNA. The protein is tRNA (guanine-N(7)-)-methyltransferase of Mycoplasma mobile (strain ATCC 43663 / 163K / NCTC 11711) (Mesomycoplasma mobile).